The primary structure comprises 247 residues: Protein GrpE (247 aa).

Disordered stretches follow at residues 1–68 (MKKN…KNDD) and 226–247 (PAEK…KNEN). 3 stretches are compositionally biased toward basic and acidic residues: residues 7-35 (KHAD…KDEQ), 43-54 (TSKENPQEDKAE), and 228-247 (EKQD…KNEN).

It belongs to the GrpE family. In terms of assembly, homodimer.

Its subcellular location is the cytoplasm. Functionally, participates actively in the response to hyperosmotic and heat shock by preventing the aggregation of stress-denatured proteins, in association with DnaK and GrpE. It is the nucleotide exchange factor for DnaK and may function as a thermosensor. Unfolded proteins bind initially to DnaJ; upon interaction with the DnaJ-bound protein, DnaK hydrolyzes its bound ATP, resulting in the formation of a stable complex. GrpE releases ADP from DnaK; ATP binding to DnaK triggers the release of the substrate protein, thus completing the reaction cycle. Several rounds of ATP-dependent interactions between DnaJ, DnaK and GrpE are required for fully efficient folding. The polypeptide is Protein GrpE (Treponema denticola (strain ATCC 35405 / DSM 14222 / CIP 103919 / JCM 8153 / KCTC 15104)).